An 89-amino-acid polypeptide reads, in one-letter code: Small ribosomal subunit protein uS15 (89 aa).

The protein belongs to the universal ribosomal protein uS15 family. As to quaternary structure, part of the 30S ribosomal subunit. Forms a bridge to the 50S subunit in the 70S ribosome, contacting the 23S rRNA.

One of the primary rRNA binding proteins, it binds directly to 16S rRNA where it helps nucleate assembly of the platform of the 30S subunit by binding and bridging several RNA helices of the 16S rRNA. Its function is as follows. Forms an intersubunit bridge (bridge B4) with the 23S rRNA of the 50S subunit in the ribosome. The polypeptide is Small ribosomal subunit protein uS15 (Erwinia tasmaniensis (strain DSM 17950 / CFBP 7177 / CIP 109463 / NCPPB 4357 / Et1/99)).